The sequence spans 78 residues: Acyl carrier protein (78 aa).

Residues 2–77 (SSIEERVKKI…LAIDYINANL (76 aa)) enclose the Carrier domain. An O-(pantetheine 4'-phosphoryl)serine modification is found at serine 37.

This sequence belongs to the acyl carrier protein (ACP) family. 4'-phosphopantetheine is transferred from CoA to a specific serine of apo-ACP by AcpS. This modification is essential for activity because fatty acids are bound in thioester linkage to the sulfhydryl of the prosthetic group.

The protein resides in the cytoplasm. It functions in the pathway lipid metabolism; fatty acid biosynthesis. Carrier of the growing fatty acid chain in fatty acid biosynthesis. This Cellvibrio japonicus (strain Ueda107) (Pseudomonas fluorescens subsp. cellulosa) protein is Acyl carrier protein.